Reading from the N-terminus, the 366-residue chain is MASSLRAAISKIKRDDVGQQVCPNYVMLRSSVNTKVVRNVVDYQIKTGGFFSCIAMLRPLQYAKRERLLGQRNLERIAARDVLQTRDLHSLCMPTPDAPMTNYQASTMRELVCDHFKVDHVDGLRYVPMDDRYSPSSLARLFTMGMAGLHITTEPAYKRVPIMHLAADLDCMTFALPYMITVDGDTVVPVAPTLPAERLLDDGFKGYGCLDISYGCEVDANNRSAGDQSMDSSRCINELYTAETAEAICILKTCLILNCMQFKLEMDDLAHNGFELDKVQMMIPFSERVFRMASAFATIDVQCFRFCLLMKDKNLKIDMRETMRLWTRAGSDDAISTSSLTISLDRGRWVAMDMNEVRLLVFPARV.

The tract at residues 1 to 11 (MASSLRAAISK) is important for ssRNA-binding and formation of complexes.

It belongs to the orthoreovirus sigma-NS protein family. Homooligomer; in presence of RNA. Interacts with protein mu-NS; this interaction allows the localization of sigma-NS to the viral factories. Interacts with host G3BP1 (via C-terminus); this interaction induces the relocalization of G3BP1 and other SG proteins to the viral factories periphery.

The protein localises to the host cytoplasm. Its function is as follows. Protein that binds to ssRNA and participates with protein mu-NS in forming the matrix of viral factories, which are large inclusions in the host cytoplasm where replication intermediates are assembled and viral RNA replication takes place. Plays a role in the inhibition of the integrated stress response (ISR) to escape from host cell translational shutoff. Participates in the disruption of stress granules (SG) through its association with host G3BP1 and mu-NS. This is Protein sigma-NS (S3) from Mammalia (T2J).